We begin with the raw amino-acid sequence, 100 residues long: NADH-quinone oxidoreductase subunit K (100 aa).

3 helical membrane passes run 4–24, 28–48, and 60–80; these read LTHG…GLVI, LLFM…AFVV, and IMYI…LALL.

Belongs to the complex I subunit 4L family. In terms of assembly, NDH-1 is composed of 13 different subunits. Subunits NuoA, H, J, K, L, M, N constitute the membrane sector of the complex.

It localises to the cell inner membrane. The catalysed reaction is a quinone + NADH + 5 H(+)(in) = a quinol + NAD(+) + 4 H(+)(out). In terms of biological role, NDH-1 shuttles electrons from NADH, via FMN and iron-sulfur (Fe-S) centers, to quinones in the respiratory chain. The immediate electron acceptor for the enzyme in this species is believed to be ubiquinone. Couples the redox reaction to proton translocation (for every two electrons transferred, four hydrogen ions are translocated across the cytoplasmic membrane), and thus conserves the redox energy in a proton gradient. The chain is NADH-quinone oxidoreductase subunit K from Klebsiella pneumoniae (strain 342).